We begin with the raw amino-acid sequence, 221 residues long: MGQKINPLGFRLGTTQGHHSLWISQPKNYSKGLKEDQNIRDFIQNYIQKNMRISSRDRVEGIARIEIKKTIDLIQIIIFMGFPIENRPRKVKEKIKELQIHLEKEFHYVKKKLKIAITKIAKPYQNPKILAEFLAGQLKDRVSFRKAMKKAIELAEQADTEGIRVQMAGRINGKDIARVEWIRRGRLPLQTIRTKIDYCCYTIRTIYGVLGIKIWIFIDEK.

Positions I43 to A121 constitute a KH type-2 domain.

The protein belongs to the universal ribosomal protein uS3 family. In terms of assembly, part of the 30S ribosomal subunit.

The protein resides in the plastid. The protein localises to the chloroplast. This Jasminum nudiflorum (Winter jasmine) protein is Small ribosomal subunit protein uS3c (rps3).